The following is a 224-amino-acid chain: Uracil phosphoribosyltransferase (224 aa).

Position 38–42 (lysine 38–lysine 42) interacts with GTP. 5-phospho-alpha-D-ribose 1-diphosphate contacts are provided by residues arginine 87, arginine 112, and aspartate 140 to threonine 148. Residues isoleucine 204 and glycine 209–alanine 211 each bind uracil. Aspartate 210 contacts 5-phospho-alpha-D-ribose 1-diphosphate.

Belongs to the UPRTase family. Requires Mg(2+) as cofactor.

The enzyme catalyses UMP + diphosphate = 5-phospho-alpha-D-ribose 1-diphosphate + uracil. It participates in pyrimidine metabolism; UMP biosynthesis via salvage pathway; UMP from uracil: step 1/1. Its activity is regulated as follows. Allosterically activated by GTP. Functionally, catalyzes the conversion of uracil and 5-phospho-alpha-D-ribose 1-diphosphate (PRPP) to UMP and diphosphate. In Thermococcus gammatolerans (strain DSM 15229 / JCM 11827 / EJ3), this protein is Uracil phosphoribosyltransferase.